A 592-amino-acid polypeptide reads, in one-letter code: Putative uric acid sigma-54-dependent transcriptional regulator UacR (592 aa).

The PAS domain maps to 158–229; that stretch reads ISKIFATMID…HMQHIVSWDD (72 aa). Residues 272–502 enclose the Sigma-54 factor interaction domain; that stretch reads LVGECRVMRQ…LSNLMEYLVN (231 aa). ATP is bound by residues 300 to 307 and 364 to 373; these read GESGTGKE and ANTGTLFLDE. Positions 567 to 585 form a DNA-binding region, H-T-H motif; the sequence is KQVADELGIGIATLYRKIK.

Essential for both formate-dependent and formate-independent uric acid degradation. May be directly involved in the transcription of uacF in response to hypoxanthine, xanthine, and uric acid. The sequence is that of Putative uric acid sigma-54-dependent transcriptional regulator UacR from Escherichia coli (strain K12).